The following is a 387-amino-acid chain: Probable G-protein coupled receptor 173 (387 aa).

Residues 1 to 40 (MANGNASSDGPGNPLAAVVSTTGGVMGGAPSSAVSTYVKL) lie on the Extracellular side of the membrane. Asparagine 5 is a glycosylation site (N-linked (GlcNAc...) asparagine). Residues 41 to 61 (VLLGLIICISLVGNLVVSLLV) traverse the membrane as a helical segment. At 62–87 (LRDRALHKAPYYFLLDLCLADTIRSA) the chain is on the cytoplasmic side. The helical transmembrane segment at 88–108 (VCFPFVLVSIKNGSAWTYSVL) threads the bilayer. At 109-111 (SCK) the chain is on the extracellular side. A disulfide bridge connects residues cysteine 110 and cysteine 188. The helical transmembrane segment at 112–132 (VVAFMAVLFCFHAAFMLFCIS) threads the bilayer. Topologically, residues 133 to 153 (VTRYMAIAHHRFYSKRMTFWT) are cytoplasmic. The helical transmembrane segment at 154-174 (CVAVVCMVWTLSVAMAFPPVF) threads the bilayer. The Extracellular segment spans residues 175-202 (DVGTYKFIREEDQCIFEHRYFKANDTLG). Residue asparagine 198 is glycosylated (N-linked (GlcNAc...) asparagine). Residues 203 to 223 (FMLMLAVLILATHVVYMKLLL) form a helical membrane-spanning segment. Topologically, residues 224-301 (FEYKHRKMKP…FKAEKQLGRM (78 aa)) are cytoplasmic. A helical transmembrane segment spans residues 302 to 322 (FYVITLFFLVLWSPYIVACYW). At 323–335 (RVFVKACTIPHRY) the chain is on the extracellular side. Residues 336–356 (LSTTVWMSFAQAGVNPIICFF) form a helical membrane-spanning segment. At 357-387 (LNKDLKKGLLAHLPPCCRTPPQLPREPYCVM) the chain is on the cytoplasmic side.

It belongs to the G-protein coupled receptor 1 family.

It is found in the cell membrane. Functionally, is a receptor for the SMIM20 derived peptides Phoenixin-14 and Phoenixin-20. It mediates the Phoenixin-14 and Phoenixin-20 augmentation of gonadotropin-releasing hormone (GNRH) signaling in the hypothalamus and pituitary gland. In the ovary, it mediates the effects of Phoenixin-14 and Phoenixin-20 induced granulosa cell proliferation during follicular growth. This Danio rerio (Zebrafish) protein is Probable G-protein coupled receptor 173 (gpr173).